A 1031-amino-acid chain; its full sequence is Toll-like receptor 9 (1031 aa).

Residues 1–25 form the signal peptide; it reads MGPCHGALHPLSLLVQAAALAVALA. At 26 to 817 the chain is on the extracellular side; sequence QGTLPAFLPC…LCLDEALSWD (792 aa). C35 and C45 are oxidised to a cystine. 47–51 provides a ligand contact to DNA; it reads WLFLK. 26 LRR repeats span residues 62–85, 87–110, 122–147, 150–166, 167–190, 198–221, 223–242, 243–268, 283–306, 308–332, 333–356, 363–386, 390–413, 415–440, 470–494, 496–519, 520–543, 545–572, 574–598, 600–622, 627–650, 652–675, 676–699, 701–723, 724–747, and 749–772; these read RGNV…DFVH, SSLR…HFPC, VPTL…SLVS, LSRT…LAGL, HSLR…ALQV, LGNL…LPPS, EYLL…DLAN, LTAL…CMEC, LNHL…WFHA, GNLM…AFQG, LAQL…HLHL, LLSL…TLRS, LPML…IFGA, PGLR…TGEV, CKTL…MFAR, SRLQ…QFMP, LTSL…SFTE, PRLE…SFVA, LPAL…LCSA, LRAL…LYLH, LRSL…TLDN, PKSL…SLVL, LPRL…SLPN, TQLQ…FFAL, ATRL…WFGS, and AGTL…AFVD. N64 carries an N-linked (GlcNAc...) asparagine glycan. DNA is bound by residues 72-77 and 95-109; these read SNRIHH and KWNC…MHFP. A disulfide bridge links C98 with C110. N-linked (GlcNAc...) asparagine glycosylation occurs at N129. DNA is bound by residues Y132, R152, and 179–181; that span reads YYK. A disulfide bridge connects residues C178 and C184. N-linked (GlcNAc...) asparagine glycosylation is present at N200. Y208 serves as a coordination point for DNA. 2 N-linked (GlcNAc...) asparagine glycosylation sites follow: N210 and N242. 2 cysteine pairs are disulfide-bonded: C255–C268 and C258–C265. C258 is lipidated: S-palmitoyl cysteine. R262 contributes to the DNA binding site. C265 is lipidated: S-palmitoyl cysteine. N340 carries N-linked (GlcNAc...) asparagine glycosylation. Cysteines 470 and 500 form a disulfide. Residues N474 and N513 are each glycosylated (N-linked (GlcNAc...) asparagine). N-linked (GlcNAc...) asparagine glycosylation is present at N567. N-linked (GlcNAc...) asparagine glycans are attached at residues N669, N694, and N699. N-linked (GlcNAc...) asparagine glycosylation occurs at N731. Cystine bridges form between C764–C790 and C766–C809. The chain crosses the membrane as a helical span at residues 818–838; sequence CFGLSLLTVALGLAVPMLHHL. The Cytoplasmic portion of the chain corresponds to 839–1031; it reads CGWDLWYCFH…NFCRGPTTAE (193 aa). The TIR domain occupies 866–1011; it reads LPYDAFVVFD…SFWAQLGTAL (146 aa).

This sequence belongs to the Toll-like receptor family. In terms of assembly, monomer and homodimer. Exists as a monomer in the absence of unmethylated cytidine-phosphate-guanosine (CpG) ligand. Proteolytic processing of an insertion loop (Z-loop) is required for homodimerization upon binding to the unmethylated CpG ligand leading to its activation. Interacts with MYD88 via their respective TIR domains. Interacts with BTK. Interacts (via transmembrane domain) with UNC93B1. Interacts with CD300LH; the interaction may promote full activation of TLR9-triggered innate responses. Interacts with CNPY3 and HSP90B1; this interaction is required for proper folding in the endoplasmic reticulum. Interacts with SMPDL3B. Interacts with CD82; this interaction is essential for TLR9-dependent myddosome formation in response to CpG stimulation. In terms of processing, activated by proteolytic cleavage of the flexible loop between repeats LRR14 and LRR15 within the ectodomain. Cleavage requires UNC93B1. Proteolytically processed by first removing the majority of the ectodomain by either asparagine endopeptidase (AEP) or a cathepsin followed by a trimming event that is solely cathepsin mediated and required for optimal receptor signaling. Palmitoylated by ZDHHC3 in the Golgi regulates TLR9 trafficking from the Golgi to endosomes. Depalmitoylation by PPT1 controls the release of TLR9 from UNC93B1 in endosomes.

It localises to the endoplasmic reticulum membrane. Its subcellular location is the endosome. The protein localises to the lysosome. The protein resides in the cytoplasmic vesicle. It is found in the phagosome. Functionally, key component of innate and adaptive immunity. TLRs (Toll-like receptors) control host immune response against pathogens through recognition of molecular patterns specific to microorganisms. TLR9 is a nucleotide-sensing TLR which is activated by unmethylated cytidine-phosphate-guanosine (CpG) dinucleotides. Acts via MYD88 and TRAF6, leading to NF-kappa-B activation, cytokine secretion and the inflammatory response. Upon CpG stimulation, induces B-cell proliferation, activation, survival and antibody production. The protein is Toll-like receptor 9 (TLR9) of Felis catus (Cat).